Reading from the N-terminus, the 338-residue chain is Malate dehydrogenase, mitochondrial (338 aa).

A mitochondrion-targeting transit peptide spans 1–24; that stretch reads MLSALARPASAALRRSFSTSAQNN. Residues 31–37 and aspartate 57 each bind NAD(+); that span reads GASGGIG. Serine 33 carries an O-linked (GlcNAc) serine glycan. An N6-acetyllysine; alternate mark is found at lysine 78 and lysine 91. 2 positions are modified to N6-succinyllysine; alternate: lysine 78 and lysine 91. Substrate is bound by residues arginine 104 and arginine 110. Residues asparagine 117 and 140-142 each bind NAD(+); that span reads IAN. Residue asparagine 142 coordinates substrate. An N6-acetyllysine modification is found at lysine 165. Position 176 (arginine 176) interacts with substrate. Lysine 185 is modified (N6-acetyllysine; alternate). At lysine 185 the chain carries N6-succinyllysine; alternate. Catalysis depends on histidine 200, which acts as the Proton acceptor. Lysine 203 bears the N6-succinyllysine mark. 2 positions are modified to N6-acetyllysine; alternate: lysine 215 and lysine 239. Lysine 215 and lysine 239 each carry N6-succinyllysine; alternate. Lysine 239 bears the N6-malonyllysine; alternate mark. Residue serine 246 is modified to Phosphoserine. Residue methionine 251 participates in NAD(+) binding. At lysine 269 the chain carries N6-succinyllysine. An N6-acetyllysine; alternate mark is found at lysine 296, lysine 301, lysine 307, lysine 314, and lysine 324. Lysine 296, lysine 301, lysine 307, lysine 314, and lysine 324 each carry N6-succinyllysine; alternate. Lysine 307 carries the N6-malonyllysine; alternate modification. Position 326 is a phosphoserine (serine 326). Lysine 328, lysine 329, and lysine 335 each carry N6-acetyllysine; alternate. An N6-succinyllysine; alternate modification is found at lysine 328. The residue at position 329 (lysine 329) is an N6-malonyllysine; alternate. Lysine 335 bears the N6-succinyllysine; alternate mark.

The protein belongs to the LDH/MDH superfamily. MDH type 1 family. In terms of assembly, homodimer. Acetylation is enhanced by up to 67% after treatment either with trichostin A (TSA) or with nicotinamide (NAM) with the appearance of tri- and tetraacetylations. Glucose also increases acetylation by about 60%.

It is found in the mitochondrion matrix. The catalysed reaction is (S)-malate + NAD(+) = oxaloacetate + NADH + H(+). Enzyme activity is enhanced by acetylation. The sequence is that of Malate dehydrogenase, mitochondrial (MDH2) from Homo sapiens (Human).